Reading from the N-terminus, the 420-residue chain is MPEPIRAVRGMNDILPDESGLWAFFEDTIRTWLAAYGYRNLRTPIVEQTDLFVRSIGEVTDIVEKEMYTFVDHLNGENLTLRPEGTASCVRAVIEHNLLYAGPQRLYYSGPMFRHERPQKGRYRQFHQVGVEALGFAGPDIDAELIVMCARLWRLLGISDVRLEISTLGSTESRSVYRARLISYLEKFCDDLDEDARRRLKTNPLRILDSKNPAMREILAGAPRLFDDLDEDSLAHFEALQRILRNQDISFEINNRLVRGLDYYNRTVFEWVTDKLGAQGTICAGGRYDGLIAQIGGKPAPACGFAMGIERILALMGENGAVGAHAIPDIYVVHQGEAAAEFSWKVAESLRDDGLKVVLHSGGGNFKAQMKKADASGARFAAIIGEDEVVAGQISIKPLREAAEQIRVDLAGAAALLGNI.

It belongs to the class-II aminoacyl-tRNA synthetase family. In terms of assembly, homodimer.

Its subcellular location is the cytoplasm. The enzyme catalyses tRNA(His) + L-histidine + ATP = L-histidyl-tRNA(His) + AMP + diphosphate + H(+). The chain is Histidine--tRNA ligase from Nitrosomonas europaea (strain ATCC 19718 / CIP 103999 / KCTC 2705 / NBRC 14298).